A 100-amino-acid polypeptide reads, in one-letter code: NADH-quinone oxidoreductase subunit K (100 aa).

3 consecutive transmembrane segments (helical) span residues 4 to 24 (LQHGLILAAILFVLGLTGLII), 29 to 49 (LFMLIGLEVMINAAALAFVVV), and 60 to 80 (VMFILAISLAAAEASIGLALL).

Belongs to the complex I subunit 4L family. In terms of assembly, NDH-1 is composed of 13 different subunits. Subunits NuoA, H, J, K, L, M, N constitute the membrane sector of the complex.

The protein resides in the cell inner membrane. It catalyses the reaction a quinone + NADH + 5 H(+)(in) = a quinol + NAD(+) + 4 H(+)(out). Functionally, NDH-1 shuttles electrons from NADH, via FMN and iron-sulfur (Fe-S) centers, to quinones in the respiratory chain. The immediate electron acceptor for the enzyme in this species is believed to be ubiquinone. Couples the redox reaction to proton translocation (for every two electrons transferred, four hydrogen ions are translocated across the cytoplasmic membrane), and thus conserves the redox energy in a proton gradient. The protein is NADH-quinone oxidoreductase subunit K of Photorhabdus laumondii subsp. laumondii (strain DSM 15139 / CIP 105565 / TT01) (Photorhabdus luminescens subsp. laumondii).